A 415-amino-acid chain; its full sequence is Ammonium transporter Rh type A (415 aa).

Residues 1–2 (MR) are Cytoplasmic-facing. The chain crosses the membrane as a helical span at residues 3–23 (FIFPTIAVLLEASMIVLFGFF). Over 24–51 (VKYETEQNAIQQPNSTNSTKVDRSLELY) the chain is Extracellular. Residues asparagine 37 and asparagine 40 are each glycosylated (N-linked (GlcNAc...) asparagine). The helical transmembrane segment at 52-72 (PLFQDVHVMIFVGFGFLMTFL) threads the bilayer. Residues 73–76 (KKYG) lie on the Cytoplasmic side of the membrane. The helical transmembrane segment at 77 to 97 (FSSVGINLLIAALGLQWGTFV) threads the bilayer. The Extracellular portion of the chain corresponds to 98–115 (QGMVHRHGQTIYIGIKNM). Residues 116–136 (INADFSTATVLISFGAVLGKI) traverse the membrane as a helical segment. Residues 137–142 (SPTQML) are Cytoplasmic-facing. The helical transmembrane segment at 143–163 (IMTIIEITVFAGNEYVVGEIF) threads the bilayer. The Extracellular segment spans residues 164–167 (QASD). A helical transmembrane segment spans residues 168–188 (IGASMTIHAFGAYFGLAVAGV). The Cytoplasmic segment spans residues 189-208 (LYRTGLRKGHEKEESEYHSD). The chain crosses the membrane as a helical span at residues 209–229 (LFAMIGTLFLWMFWPSFNSAI). The Extracellular segment spans residues 230–236 (AETAEEQ). The chain crosses the membrane as a helical span at residues 237 to 257 (YLAIINTYLSLVACVLTAYAM). The Cytoplasmic segment spans residues 258–268 (SSLVGHRGKLD). The helical transmembrane segment at 269–287 (MVHIQNATLAGGVAVGTCA) threads the bilayer. At 288 to 290 (DMK) the chain is on the extracellular side. The chain crosses the membrane as a helical span at residues 291 to 311 (IHPYGSLIIGSIAGMVSVLGF). Topologically, residues 312–332 (RFLTPCLTAKLRIHDTCGVHN) are cytoplasmic. Residues 333 to 353 (LHGLPGVVGGLSSIVAILLGV) form a helical membrane-spanning segment. Residues 354 to 363 (STASSMTMQA) lie on the Extracellular side of the membrane. A helical membrane pass occupies residues 364-384 (AALGSSIGSAIAGGLITGLIL). Topologically, residues 385–415 (RFIVRGQPSKDNFFDDSVYWEVPKEKELDNV) are cytoplasmic.

This sequence belongs to the ammonium transporter (TC 2.A.49) family. Rh subfamily. In terms of assembly, homodimer. Heterotrimer; a RHCE monomer interacts with a RHAG homodimer. Component of the ankyrin-1 complex in the erythrocyte, composed of ANK1, RHCE, RHAG, SLC4A1, EPB42, GYPA, GYPB and AQP1. Interacts with GYPB (via the N-terminal); this interaction bridges the (RHAG)2(RHCE) heterotrimer with the SLC4A1 Band 3 I dimer complexed with GYPA. Glycosylated.

It is found in the membrane. It catalyses the reaction methylamine(out) = methylamine(in). It carries out the reaction NH4(+)(in) = NH4(+)(out). The enzyme catalyses CO2(out) = CO2(in). In terms of biological role, component of the ankyrin-1 complex, a multiprotein complex involved in the stability and shape of the erythrocyte membrane. Heterotrimer with RHCE (RHAG)2(RHCE), that transports ammonium and its related derivative methylammonium, in both neutral and ionic forms, across the erythrocyte membrane. The transport of NH4(+) is electrogenic and masks the NH3 transport. Also, may act as a CO2 channel. Moreover in erythrocyte, regulates RHD membrane expression and is associated with rhesus blood group antigen expression. The sequence is that of Ammonium transporter Rh type A from Canis lupus familiaris (Dog).